The following is a 502-amino-acid chain: Probable cytochrome P450 28d1 (502 aa).

Cys446 contacts heme.

It belongs to the cytochrome P450 family. Heme is required as a cofactor.

It is found in the endoplasmic reticulum membrane. The protein localises to the microsome membrane. May be involved in the metabolism of insect hormones and in the breakdown of synthetic insecticides. The sequence is that of Probable cytochrome P450 28d1 (Cyp28d1) from Drosophila melanogaster (Fruit fly).